A 141-amino-acid chain; its full sequence is Protein stum homolog (141 aa).

A Phosphoserine modification is found at Ser-26. 2 helical membrane passes run 51–71 (FPVAVICLFLNTFVPGLGTFV) and 87–107 (RHVCCVFWLNIAAALIQILTA).

Belongs to the SPEC3 family. Stum subfamily.

The protein localises to the membrane. The chain is Protein stum homolog from Homo sapiens (Human).